Here is a 185-residue protein sequence, read N- to C-terminus: Large ribosomal subunit protein uL5c (185 aa).

This sequence belongs to the universal ribosomal protein uL5 family. In terms of assembly, part of the 50S ribosomal subunit; contacts the 5S rRNA.

Its subcellular location is the plastid. The protein localises to the chloroplast. In terms of biological role, binds 5S rRNA, forms part of the central protuberance of the 50S subunit. In Chlorokybus atmophyticus (Soil alga), this protein is Large ribosomal subunit protein uL5c (rpl5).